A 152-amino-acid chain; its full sequence is UPF0178 protein YaiI (152 aa).

This sequence belongs to the UPF0178 family.

This Escherichia coli O81 (strain ED1a) protein is UPF0178 protein YaiI.